A 442-amino-acid chain; its full sequence is Na(+)/H(+) antiporter NhaA (442 aa).

Transmembrane regions (helical) follow at residues 32-52 (IGGG…NSPW), 73-93 (LTLA…VAGL), 111-131 (AVPV…YALV), 139-159 (AGWA…LAVI), 170-190 (FLLT…AVVY), 193-213 (HLSI…TLLV), 234-254 (VHAS…AVPV), 284-304 (VAVP…LSGL), 316-336 (VVLG…FLVA), 352-372 (VLGL…IGEL), and 383-403 (HVKI…AVVL). A compositionally biased stretch (basic and acidic residues) spans 423–435 (HDGIPDVYQDLHR). Residues 423–442 (HDGIPDVYQDLHRSSPRPWG) are disordered.

Belongs to the NhaA Na(+)/H(+) (TC 2.A.33) antiporter family.

The protein resides in the cell membrane. It catalyses the reaction Na(+)(in) + 2 H(+)(out) = Na(+)(out) + 2 H(+)(in). In terms of biological role, na(+)/H(+) antiporter that extrudes sodium in exchange for external protons. This chain is Na(+)/H(+) antiporter NhaA, found in Frankia casuarinae (strain DSM 45818 / CECT 9043 / HFP020203 / CcI3).